The primary structure comprises 414 residues: MAPTMGVDDLLASPQDDRSPTLLEKDLILAAEVGQALLEKNEELASQIMQMESEMEAMQQEKHMVQRRLEVRDLEASQREAELQADISALRAQLEQKHIQGRDRRREESEQLIQLSNHNQKLVEQLAEAVSLEHTLRTELRTLREEMEDTSFSKSISSARLDSLQAENRVLKERCTHMDERLKSTQEDNERLRSERDGLRERAIELQTSLKDKETELEQEHSTVFQLRTVNRTLQQRVQALGEEASLGEATCFPLSLQSEIQQCQAKETILAHSSVLREKEEEIQRLQKELQSRETELEGLREEVKLFRNSPGKPTYKALEEEMILARQERDALNQQLLNTIRHKVALSQEVESWQEDMRLVICQQVQLQQQEKEKENNKERTGFQRGTRTTKSLRLRGEEGRKGFFSALFGGD.

Residues 34–341 (GQALLEKNEE…DALNQQLLNT (308 aa)) are a coiled coil. Positions 372–384 (QEKEKENNKERTG) are enriched in basic and acidic residues. Residues 372–399 (QEKEKENNKERTGFQRGTRTTKSLRLRG) form a disordered region.

The sequence is that of BICD family-like cargo adapter 2 (bicdl2) from Danio rerio (Zebrafish).